The following is a 611-amino-acid chain: UvrABC system protein C (611 aa).

In terms of domain architecture, GIY-YIG spans 14–91; that stretch reads TSPGCYIHKD…IKENKPKYNI (78 aa). Positions 196–231 constitute a UVR domain; it reads DQIIEDLRGKMAGAAQTMEFEKAAEYRDLIQSIGTL.

Belongs to the UvrC family. As to quaternary structure, interacts with UvrB in an incision complex.

The protein resides in the cytoplasm. Functionally, the UvrABC repair system catalyzes the recognition and processing of DNA lesions. UvrC both incises the 5' and 3' sides of the lesion. The N-terminal half is responsible for the 3' incision and the C-terminal half is responsible for the 5' incision. The polypeptide is UvrABC system protein C (Streptococcus gordonii (strain Challis / ATCC 35105 / BCRC 15272 / CH1 / DL1 / V288)).